Here is a 52-residue protein sequence, read N- to C-terminus: Keratin-associated protein 19-2 (52 aa).

This sequence belongs to the KRTAP type 19 family. As to quaternary structure, interacts with hair keratins.

In the hair cortex, hair keratin intermediate filaments are embedded in an interfilamentous matrix, consisting of hair keratin-associated proteins (KRTAP), which are essential for the formation of a rigid and resistant hair shaft through their extensive disulfide bond cross-linking with abundant cysteine residues of hair keratins. The matrix proteins include the high-sulfur and high-glycine-tyrosine keratins. The chain is Keratin-associated protein 19-2 (KRTAP19-2) from Homo sapiens (Human).